A 255-amino-acid polypeptide reads, in one-letter code: 4-hydroxy-tetrahydrodipicolinate reductase (255 aa).

NAD(+)-binding positions include 8 to 13, 88 to 90, and 112 to 115; these read GSTGRM, ATT, and SSNM. The Proton donor/acceptor role is filled by His-144. A (S)-2,3,4,5-tetrahydrodipicolinate-binding site is contributed by His-145. Residue Lys-148 is the Proton donor of the active site. 154 to 155 contributes to the (S)-2,3,4,5-tetrahydrodipicolinate binding site; sequence GT.

It belongs to the DapB family.

Its subcellular location is the cytoplasm. It catalyses the reaction (S)-2,3,4,5-tetrahydrodipicolinate + NAD(+) + H2O = (2S,4S)-4-hydroxy-2,3,4,5-tetrahydrodipicolinate + NADH + H(+). The catalysed reaction is (S)-2,3,4,5-tetrahydrodipicolinate + NADP(+) + H2O = (2S,4S)-4-hydroxy-2,3,4,5-tetrahydrodipicolinate + NADPH + H(+). Its pathway is amino-acid biosynthesis; L-lysine biosynthesis via DAP pathway; (S)-tetrahydrodipicolinate from L-aspartate: step 4/4. Catalyzes the conversion of 4-hydroxy-tetrahydrodipicolinate (HTPA) to tetrahydrodipicolinate. The protein is 4-hydroxy-tetrahydrodipicolinate reductase of Sulfurovum sp. (strain NBC37-1).